The primary structure comprises 724 residues: MALISNLKDEYDHPTKTDPDTNPKIVADIISSKEPPQPSQDVAEERSRTDWDLKEMHEFLEGDEAKSEEILRLYQSIERDPILQTRPEQFDYTKNEERESVALRINQMSKYLETEPYEKFRRRLQLMTVNDPSLGIRMLVNIGLFLNCIRGNGTQKQYDFWAKTKEAGKVKQLLRLFRYDELGHGFNVAGCEIFATFDEKTDQFIIDTPHIGATKWWIGGAAHSATHTVCYARLIVKDIDYGVKTFVVPLRDSTHNLLPGVAIGDIGPKLGRQGVDNGWIQFTEVRIPRFFMLQRWCKVDRQGNVTLPPLEQLSYISLLEGRVGMATDSYRIGARYTTIALRYAVARRQFSKGDGQPETKLIDYTLHQRRLLPYLALTYLAALGTDKLERQHDQLLKNLDKALATNNKLLLKNTIQSTKSMFVDSGSLKSTLTWLASDLINEARQSCGGHGYSAYNGFGKTYGDWAVQCTWEGDNNVLGMSAGKTIIKTVQQVLNGKQLKDSTLEFLNDAPALSSAKKAVIRIKSHVDDTDRVLKAIAGLISKYAKDLIPVSYQSWDSIGPQRVVLSKFRCHYYLLETFNERLNDRIKAKSPARPHLENIIKLYYVTNVLGPFIDEFLRFGVISPSVAKYITTEYPQKLCAAIRPYVIGLTDSFQQPDNFINSLIGRYDGNVYTNYLTNVTNVNDPTNYKAPYSEALEAMLNRASLEERERFEKSKAVAAKLSQ.

The interval 1–23 is disordered; the sequence is MALISNLKDEYDHPTKTDPDTNP. Basic and acidic residues predominate over residues 7–21; the sequence is LKDEYDHPTKTDPDT.

Belongs to the acyl-CoA oxidase family. The cofactor is FAD.

It is found in the peroxisome. It catalyses the reaction a 2,3-saturated acyl-CoA + O2 = a (2E)-enoyl-CoA + H2O2. The protein operates within lipid metabolism; peroxisomal fatty acid beta-oxidation. This is Acyl-coenzyme A oxidase 2 (POX2) from Candida maltosa (Yeast).